The sequence spans 132 residues: Large ribosomal subunit protein uL24 (132 aa).

The protein belongs to the universal ribosomal protein uL24 family. Part of the 50S ribosomal subunit.

Functionally, one of two assembly initiator proteins, it binds directly to the 5'-end of the 23S rRNA, where it nucleates assembly of the 50S subunit. Located at the polypeptide exit tunnel on the outside of the subunit. This chain is Large ribosomal subunit protein uL24, found in Aeropyrum pernix (strain ATCC 700893 / DSM 11879 / JCM 9820 / NBRC 100138 / K1).